The primary structure comprises 92 residues: CRISPR-associated endoribonuclease Cas2 (92 aa).

Residue aspartate 9 coordinates Mg(2+).

The protein belongs to the CRISPR-associated endoribonuclease Cas2 protein family. In terms of assembly, homodimer, forms a heterotetramer with a Cas1 homodimer. Mg(2+) is required as a cofactor.

Functionally, CRISPR (clustered regularly interspaced short palindromic repeat), is an adaptive immune system that provides protection against mobile genetic elements (viruses, transposable elements and conjugative plasmids). CRISPR clusters contain sequences complementary to antecedent mobile elements and target invading nucleic acids. CRISPR clusters are transcribed and processed into CRISPR RNA (crRNA). Functions as a ssRNA-specific endoribonuclease. Involved in the integration of spacer DNA into the CRISPR cassette. In Aeropyrum pernix (strain ATCC 700893 / DSM 11879 / JCM 9820 / NBRC 100138 / K1), this protein is CRISPR-associated endoribonuclease Cas2.